A 291-amino-acid polypeptide reads, in one-letter code: MQSSTAHPSRLALYARLVRIDKPIGTLLLLWPTLWAMWMAADGHPPPALVAIFVVGTVLMRSAGCAINDWADRDFDKHVKRTRERPLTAGLIAPWEALAVAAVLALVAFTLILPLNALTKWLSVAAVLIAGTYPFFKRFFAIPQAYLGIAFGFGIPMAYAAVQDQVPAPAWLMLAANVLWAIAYDTAYAMVDRDDDLLIGIQTSAITFGRFDVAAIMLCYAGFFGIMAWVGHALALGAAYWIGLAAAAALAGYYYTLLRTRDRMQCFFVFRHNNWFGACVFVGAALAYALR.

The next 8 membrane-spanning stretches (helical) occupy residues 23–43 (PIGT…AADG), 47–67 (PALV…GCAI), 98–118 (LAVA…LNAL), 139–159 (FFAI…PMAY), 171–191 (WLML…YAMV), 216–236 (IMLC…ALAL), 238–258 (AAYW…YTLL), and 267–287 (FFVF…AALA).

This sequence belongs to the UbiA prenyltransferase family. The cofactor is Mg(2+).

The protein resides in the cell inner membrane. It carries out the reaction all-trans-octaprenyl diphosphate + 4-hydroxybenzoate = 4-hydroxy-3-(all-trans-octaprenyl)benzoate + diphosphate. Its pathway is cofactor biosynthesis; ubiquinone biosynthesis. In terms of biological role, catalyzes the prenylation of para-hydroxybenzoate (PHB) with an all-trans polyprenyl group. Mediates the second step in the final reaction sequence of ubiquinone-8 (UQ-8) biosynthesis, which is the condensation of the polyisoprenoid side chain with PHB, generating the first membrane-bound Q intermediate 3-octaprenyl-4-hydroxybenzoate. The sequence is that of 4-hydroxybenzoate octaprenyltransferase from Ralstonia nicotianae (strain ATCC BAA-1114 / GMI1000) (Ralstonia solanacearum).